A 299-amino-acid chain; its full sequence is Small ribosomal subunit biogenesis GTPase RsgA (299 aa).

Residues 73–232 (CSWLTRPQVA…VADTPGFNRP (160 aa)) form the CP-type G domain. GTP contacts are provided by residues 122 to 125 (TKGD) and 174 to 182 (GPSGVGKSS). Residues Cys-257, Cys-262, His-264, and Cys-270 each contribute to the Zn(2+) site.

It belongs to the TRAFAC class YlqF/YawG GTPase family. RsgA subfamily. Monomer. Associates with 30S ribosomal subunit, binds 16S rRNA. Zn(2+) serves as cofactor.

Its subcellular location is the cytoplasm. Its function is as follows. One of several proteins that assist in the late maturation steps of the functional core of the 30S ribosomal subunit. Helps release RbfA from mature subunits. May play a role in the assembly of ribosomal proteins into the subunit. Circularly permuted GTPase that catalyzes slow GTP hydrolysis, GTPase activity is stimulated by the 30S ribosomal subunit. The sequence is that of Small ribosomal subunit biogenesis GTPase RsgA from Parasynechococcus marenigrum (strain WH8102).